A 164-amino-acid chain; its full sequence is UPF0304 protein CKO_00501 (164 aa).

The protein belongs to the UPF0304 family.

The protein is UPF0304 protein CKO_00501 of Citrobacter koseri (strain ATCC BAA-895 / CDC 4225-83 / SGSC4696).